A 323-amino-acid polypeptide reads, in one-letter code: tRNA U34 carboxymethyltransferase (323 aa).

Carboxy-S-adenosyl-L-methionine is bound by residues Lys-91, Trp-105, Lys-110, Gly-130, 152 to 154 (DPT), 181 to 182 (IE), Met-196, Tyr-200, and Arg-315.

It belongs to the class I-like SAM-binding methyltransferase superfamily. CmoB family. In terms of assembly, homotetramer.

The catalysed reaction is carboxy-S-adenosyl-L-methionine + 5-hydroxyuridine(34) in tRNA = 5-carboxymethoxyuridine(34) in tRNA + S-adenosyl-L-homocysteine + H(+). Functionally, catalyzes carboxymethyl transfer from carboxy-S-adenosyl-L-methionine (Cx-SAM) to 5-hydroxyuridine (ho5U) to form 5-carboxymethoxyuridine (cmo5U) at position 34 in tRNAs. The polypeptide is tRNA U34 carboxymethyltransferase (Escherichia coli (strain SE11)).